The primary structure comprises 146 residues: uncharacterized protein (146 aa).

2 disordered regions span residues 1–33 (MATFHRAHATSSVKPRARRHQEPNSGDWPGSYR) and 50–70 (QHWRPRSLGAGQGREDPSWEG).

This is an uncharacterized protein from Homo sapiens (Human).